A 602-amino-acid polypeptide reads, in one-letter code: Cholinesterase (602 aa).

A signal peptide spans 1 to 28 (MHSKVTIICIRFLFWFLLLCMLIGKSHT). Residues Asn45 and Asn85 are each glycosylated (N-linked (GlcNAc...) (complex) asparagine). Cys93 and Cys120 are joined by a disulfide. Trp110 lines the tacrine pocket. Asn134 carries N-linked (GlcNAc...) (complex) asparagine glycosylation. Residue 144–145 (GG) coordinates substrate. Ser226 (acyl-ester intermediate) is an active-site residue. Position 226 is a phosphoserine (Ser226). 2 N-linked (GlcNAc...) (complex) asparagine glycosylation sites follow: Asn269 and Asn284. An intrachain disulfide couples Cys280 to Cys291. Catalysis depends on Glu353, which acts as the Charge relay system. An N-linked (GlcNAc...) (complex) asparagine glycan is attached at Asn369. An intrachain disulfide couples Cys428 to Cys547. His466 is a tacrine binding site. Residue His466 is the Charge relay system of the active site. Asn483 carries an N-linked (GlcNAc...) (complex) asparagine glycan. Asn509, Asn513, and Asn514 each carry an N-linked (GlcNAc...) asparagine glycan.

It belongs to the type-B carboxylesterase/lipase family. As to quaternary structure, homotetramer; disulfide-linked. Dimer of dimers. N-glycosylated. No other PTM detected. The major N-glycan structures are of the complex diantennary type with 1 and 2 N-acetylneuraminic acid molecules (Neu5Ac) making up approximately 33% and 47% of the total N-glycans, respectively. Only low amounts of fucosylated diantennary N-glycans are detected (approximately 2%). Triantennary N-glycans with or without fucose amount to approximately 13%, whereas 5% of the total N-glycans are of the oligomannosidic or hybrid type. Detected in blood plasma (at protein level). Present in most cells except erythrocytes.

The protein localises to the secreted. The catalysed reaction is an acylcholine + H2O = a carboxylate + choline + H(+). Its activity is regulated as follows. Inhibited by mercury. Inhibited by Tabun. Tabun forms a covalent adduct with Ser-226 that becomes irreversible upon aging. Its function is as follows. Esterase with broad substrate specificity. Contributes to the inactivation of the neurotransmitter acetylcholine. Can degrade neurotoxic organophosphate esters. The protein is Cholinesterase (BCHE) of Homo sapiens (Human).